Reading from the N-terminus, the 593-residue chain is Dolichyl-phosphooligosaccharide-protein glycotransferase 2 (593 aa).

Residues 1–12 lie on the Cytoplasmic side of the membrane; sequence MTPVGMDRKSLS. The helical transmembrane segment at 13 to 33 threads the bilayer; sequence LLILIVLLGLCIRLQNFGEIF. Topologically, residues 34-98 are extracellular; the sequence is DSRIYYYGYD…GLFLGFWASE (65 aa). The short motif at 41–43 is the DXD motif 1 element; the sequence is GYD. Residue Asp43 coordinates Mn(2+). A helical transmembrane segment spans residues 99 to 119; that stretch reads IFAVVFPVIIGVLCIVLVYLI. Topologically, residues 120 to 128 are cytoplasmic; the sequence is SLEVLRNEK. A helical membrane pass occupies residues 129 to 149; that stretch reads FALISAFIFSVCPVTVWKSLL. Residues 150 to 154 are Extracellular-facing; it reads GKADH. Residue Asp153 coordinates Mn(2+). A DXD motif 2 motif is present at residues 153–155; sequence DHH. His154 contacts a glycophospholipid. His155 lines the Mn(2+) pocket. A helical membrane pass occupies residues 155–175; the sequence is HIWVVFLLLLSIWLVTKPGLL. Residues 176–180 are Cytoplasmic-facing; sequence KLLSG. A helical transmembrane segment spans residues 181-201; the sequence is IPMLLMALSWLGAPIYAALLA. Over 202–229 the chain is Extracellular; sequence VSSLFQFNEKEVRIVGISNLIPVLSSIQ. Residues 230–250 traverse the membrane as a helical segment; sequence NLFLGFSFLAIAVFLLVGSFV. Over 251 to 265 the chain is Cytoplasmic; the sequence is KRFERRFRYAIVYYL. Residues 266–286 form a helical membrane-spanning segment; sequence CICSVALLSAYLMPVGWLGFV. Residues 287–310 lie on the Extracellular side of the membrane; that stretch reads KSGISYVLGTDIYLPTIREARSFQ. Residues 302 to 305 carry the TIXE motif motif; that stretch reads TIRE. A helical transmembrane segment spans residues 311–331; the sequence is ILGVISSAGYLFFVLAIPALF. A topological domain (cytoplasmic) is located at residue Met332. The helical transmembrane segment at 333 to 353 threads the bilayer; the sequence is LRNGFLKVFFVLSFLISILQL. A topological domain (extracellular) is located at residue Arg354. Residue Arg354 participates in a glycophospholipid binding. A helical transmembrane segment spans residues 355–375; it reads FVEVLAFPVAILASYTICQIL. At 376–411 the chain is on the cytoplasmic side; sequence ERVDYPVFRKEEEGESKRRGRKEKKKAVEIRKKDHA. A helical transmembrane segment spans residues 412 to 432; it reads TVIAFLLFLALPCFANSLAPV. Residues 433 to 593 are Extracellular-facing; that stretch reads EMTMDWKEAL…FGTVKIFEVK (161 aa). The segment at 468–470 is interacts with target acceptor peptide in protein substrate; that stretch reads WWD. The WWDYG motif motif lies at 468 to 472; the sequence is WWDYG. The DKi motif signature appears at 524-539; that stretch reads ELTVKPETNKTKFIPI.

This sequence belongs to the STT3 family. Requires Mn(2+) as cofactor. Mg(2+) serves as cofactor. It depends on Zn(2+) as a cofactor.

The protein localises to the cell membrane. The enzyme catalyses an archaeal dolichyl phosphooligosaccharide + [protein]-L-asparagine = an archaeal dolichyl phosphate + a glycoprotein with the oligosaccharide chain attached by N-beta-D-glycosyl linkage to a protein L-asparagine.. It functions in the pathway protein modification; protein glycosylation. Its function is as follows. Oligosaccharyl transferase (OST) that catalyzes the initial transfer of a defined glycan (a GalNAc-linked heptasaccharide composed of 4 Hex, 3 dHex and a sulfate for A.fulgidus AglB-S) from the lipid carrier dolichol-monophosphate to an asparagine residue within an Asn-X-Ser/Thr consensus motif in nascent polypeptide chains, the first step in protein N-glycosylation. The protein is Dolichyl-phosphooligosaccharide-protein glycotransferase 2 (aglB2) of Archaeoglobus fulgidus (strain ATCC 49558 / DSM 4304 / JCM 9628 / NBRC 100126 / VC-16).